We begin with the raw amino-acid sequence, 377 residues long: Alanine racemase (377 aa).

The Proton acceptor; specific for D-alanine role is filled by Lys-35. At Lys-35 the chain carries N6-(pyridoxal phosphate)lysine. Arg-130 lines the substrate pocket. The Proton acceptor; specific for L-alanine role is filled by Tyr-260. Met-312 contributes to the substrate binding site.

It belongs to the alanine racemase family. It depends on pyridoxal 5'-phosphate as a cofactor.

The catalysed reaction is L-alanine = D-alanine. It participates in amino-acid biosynthesis; D-alanine biosynthesis; D-alanine from L-alanine: step 1/1. In terms of biological role, catalyzes the interconversion of L-alanine and D-alanine. May also act on other amino acids. The protein is Alanine racemase (alr) of Leptothrix cholodnii (strain ATCC 51168 / LMG 8142 / SP-6) (Leptothrix discophora (strain SP-6)).